Here is a 637-residue protein sequence, read N- to C-terminus: MAKMRVRFPMLVLLLGVVFLLAVSIGIAYGEKDVIKNPERPEERQEEERDPRQPPRSRQQEEQEREHRREKERDREPSRGRSESKQSQEEERERRKEHDREREQEQQPQYGRRHEEEEKGEEEEEGQARRQRPQRRREEREQEQGSSSESRRQSGDERRHRHEKREQREEREQEQGSSSGRQSDYGRRQRHEGREQREEREQEQGSSSESHRLRNPYYFSSERFQTRYKNKNGQIRVLERFDQRTNRLENLQNYRIVEFQSRPNTLILPKHSDADYILVVLNGRATITIVNPDKRQAYNLEYGDALRLPAGTTSYILNPDDNQDLRVVKLAIPINNPGKFYDFYPSRTKDQQSYFSGFSKNTLEATFNTHYEEIQRILLGYEDEQEDEEQRREQEQSHQDEGVIVRVSKEQIQELRKHAQSSSRKGKPSESGPFNLRSNEPIYSNKFGNFYEITPDRNPQVQDLDISLIFTEISEGALLLPHYNSKAIFVIVVDEGEGNYELVGIRNQQRQQDEQEVEEVRSYNARLSEGDILVIPAGHPLSINASSNLRLLGFGINADENQRNFLAGSEDNVIRQLDREVKELIFPGSAEDVERLIRNQQQSYFANAQPQQQQQQREKEGRRGRRGPISSILSALY.

Residues 1–30 form the signal peptide; sequence MAKMRVRFPMLVLLLGVVFLLAVSIGIAYG. Basic and acidic residues-rich tracts occupy residues 33–105, 136–174, and 184–203; these read DVIK…REQE, RREE…REQE, and DYGR…REQE. Disordered stretches follow at residues 33-221 and 384-439; these read DVIK…YFSS and EQED…LRSN. The region spanning 217 to 375 is the Cupin type-1 1 domain; it reads YYFSSERFQT…TFNTHYEEIQ (159 aa). Basic and acidic residues predominate over residues 389-417; it reads EQRREQEQSHQDEGVIVRVSKEQIQELRK. The Cupin type-1 2 domain maps to 434 to 594; it reads FNLRSNEPIY…IFPGSAEDVE (161 aa). Residue Asn544 is glycosylated (N-linked (GlcNAc...) asparagine). Residues 606–615 show a composition bias toward low complexity; the sequence is ANAQPQQQQQ. Positions 606–626 are disordered; sequence ANAQPQQQQQQREKEGRRGRR.

The protein belongs to the 7S seed storage protein family. Component of globulins complexes which accumulate in seeds.

Its function is as follows. Seed storage protein. Accumulates during seed development and is hydrolyzed after germination to provide a carbon and nitrogen source for the developing seedling. This is Conglutin beta 5 from Lupinus angustifolius (Narrow-leaved blue lupine).